The chain runs to 402 residues: tRNA(Met) cytidine acetate ligase (402 aa).

ATP contacts are provided by residues 7–20, Gly-102, Asn-171, and Arg-196; that span reads ITEYNPFHLGHELH.

Belongs to the TmcAL family.

The protein resides in the cytoplasm. It carries out the reaction cytidine(34) in elongator tRNA(Met) + acetate + ATP = N(4)-acetylcytidine(34) in elongator tRNA(Met) + AMP + diphosphate. Its function is as follows. Catalyzes the formation of N(4)-acetylcytidine (ac(4)C) at the wobble position of elongator tRNA(Met), using acetate and ATP as substrates. First activates an acetate ion to form acetyladenylate (Ac-AMP) and then transfers the acetyl group to tRNA to form ac(4)C34. The protein is tRNA(Met) cytidine acetate ligase of Clostridium perfringens (strain ATCC 13124 / DSM 756 / JCM 1290 / NCIMB 6125 / NCTC 8237 / Type A).